The following is a 199-amino-acid chain: Recombination protein RecR (199 aa).

Residues 57–72 form a C4-type zinc finger; it reads CQSCRTYTEETLCPIC. Positions 81–176 constitute a Toprim domain; the sequence is STICVVETPA…MISRIAHGVP (96 aa).

It belongs to the RecR family.

In terms of biological role, may play a role in DNA repair. It seems to be involved in an RecBC-independent recombinational process of DNA repair. It may act with RecF and RecO. The protein is Recombination protein RecR of Shewanella baltica (strain OS195).